We begin with the raw amino-acid sequence, 268 residues long: Universal stress protein MT3220 (268 aa).

ATP-binding positions include G13, 107 to 113 (GSVGLDH), R117, and 120 to 121 (SV).

It belongs to the universal stress protein A family.

The polypeptide is Universal stress protein MT3220 (Mycobacterium tuberculosis (strain CDC 1551 / Oshkosh)).